The primary structure comprises 133 residues: Small ribosomal subunit protein uS11 (133 aa).

The segment at 1 to 23 (MPPKTRGAVRKPRKKDKKNIALG) is disordered. Residues 7–17 (GAVRKPRKKDK) show a composition bias toward basic residues.

The protein belongs to the universal ribosomal protein uS11 family. In terms of assembly, part of the 30S ribosomal subunit. Interacts with proteins S7 and S18. Binds to IF-3.

Located on the platform of the 30S subunit, it bridges several disparate RNA helices of the 16S rRNA. Forms part of the Shine-Dalgarno cleft in the 70S ribosome. In Pseudarthrobacter chlorophenolicus (strain ATCC 700700 / DSM 12829 / CIP 107037 / JCM 12360 / KCTC 9906 / NCIMB 13794 / A6) (Arthrobacter chlorophenolicus), this protein is Small ribosomal subunit protein uS11.